The primary structure comprises 75 residues: Psi-conotoxin PIIIE (75 aa).

The first 19 residues, 1 to 19, serve as a signal peptide directing secretion; sequence MSKLGALLTICLLLFPITA. Positions 20–50 are excised as a propeptide; that stretch reads LLMDGDQPADRPAERMDYDISSEVHRLLERR. 4-hydroxyproline is present on residues P52, P53, and P64. Disulfide bonds link C54-C66, C55-C71, and C60-C72. The residue at position 74 (G74) is a Glycine amide.

In terms of tissue distribution, expressed by the venom duct.

The protein resides in the secreted. Psi-conotoxins act on postsynaptic membranes, and act as non-competitive antagonist of nicotinic acetylcholine receptors (nAChR). Is more toxic than Psi-conotoxin PIIIF. In vivo, has paralytic activity when injected intraperitoneally into goldfish. This is Psi-conotoxin PIIIE from Conus purpurascens (Purple cone).